Reading from the N-terminus, the 29-residue chain is Lambda-theraphotoxin-Ec2a (29 aa).

Cystine bridges form between C2–C16, C9–C21, and C15–C25.

It belongs to the neurotoxin 30 (phrixotoxin) family. In terms of tissue distribution, expressed by the venom gland.

It is found in the secreted. Its function is as follows. Insect-selective neurotoxin that potently blocks insect calcium-activated potassium (BKCa) channels (Slo-type) in cockroach dorsal unpaired median (DUM) neurons (IC(50)=3.7 nM). This occurs in the absence of any shifts in the voltage dependence of activation. At high concentrations (330 nM), it partially inhibits cockroach delayed-rectifier potassium channels (Kv) currents. May interact with the turret and/or loop region of the external entrance to the channel and does not project deeply into the pore of the channel. In vivo, does not show toxicity in mice after intracerebroventricular injection of up to 25 pmol/g (1.8 ug/20 g mouse). In Eucratoscelus constrictus (African red-rump baboon spider), this protein is Lambda-theraphotoxin-Ec2a.